A 451-amino-acid chain; its full sequence is MVVKVKQKIPLKIKRMGINGEGIGFYQKTLVFVPGALKGEDIFCQITAVKRNFAEAKLLTVNKASKNRVKPACSVYETCGGCQIMHLAYPKQLDFKDDVIRQALKKFKPTGYEQFEIRPTLGMKKPDHYRAKLQFQLRSFGGTVKAGLFSQGSHRLVPIDNCLVQDQLTQDIINKITQLVDKYKLPIYNERKIAGIRTIMVRKAQASDQVQIIVVSSKEVRLANFIGELTKAFPQVKTVALNSNRSKSSEIYGDETEILWGQEAIHEEVLDYGFALSPRAFYQLNPQQTEVLYGEVVKALDVGSKDHIIDAYCGVGSIGFAFAGKVKSVRGMDIIPEAIEDAQKNAKAMGFDNAYYEAGKAEDIISKWYKQGYRADAVIVDPPRTGLDDKLLKTILHYQPKQMVYVSCNTSTLARDLVQLTKVYDVHYIQSVDMFPHTARTEAVVKLQKRV.

In terms of domain architecture, TRAM spans V2–T60. Residues C73, C79, C82, and C162 each contribute to the [4Fe-4S] cluster site. S-adenosyl-L-methionine is bound by residues Q283, Y312, D333, and D381. C408 acts as the Nucleophile in catalysis.

This sequence belongs to the class I-like SAM-binding methyltransferase superfamily. RNA M5U methyltransferase family.

This is an uncharacterized protein from Streptococcus pyogenes serotype M1.